A 903-amino-acid chain; its full sequence is DNA mismatch repair protein MutS (903 aa).

An ATP-binding site is contributed by 655–662; sequence GPNMAGKS.

It belongs to the DNA mismatch repair MutS family.

Functionally, this protein is involved in the repair of mismatches in DNA. It is possible that it carries out the mismatch recognition step. This protein has a weak ATPase activity. The sequence is that of DNA mismatch repair protein MutS from Caulobacter vibrioides (strain ATCC 19089 / CIP 103742 / CB 15) (Caulobacter crescentus).